Here is an 81-residue protein sequence, read N- to C-terminus: Elicitor peptide 4 (81 aa).

The propeptide occupies 1 to 54; the sequence is MERGVSYYLWIPFKFIHQTFGSLLLKLLGLRSPSDHSFPEDGEEEVKVVEVSSR. The tract at residues 57–81 is disordered; it reads PGKKNVLKKSRESSGKPGGTNKKPF.

It belongs to the brassicaceae elicitor peptide family.

Functionally, elicitor of plant defense. This chain is Elicitor peptide 4 (PEP4), found in Arabidopsis thaliana (Mouse-ear cress).